Reading from the N-terminus, the 402-residue chain is MAT+ sexual cell fertilization-promoting factor (402 aa).

Positions 169–237 (IPRPPNAYIL…KLMSAHPHYR (69 aa)) form a DNA-binding region, HMG box. The interval 246 to 272 (IRRRAPRRNRAQEVANASPIGENSGAP) is disordered.

Its subcellular location is the nucleus. Controls fertilization, probably by determining the mating type. The protein is MAT+ sexual cell fertilization-promoting factor (FPR1) of Podospora anserina (Pleurage anserina).